Here is a 427-residue protein sequence, read N- to C-terminus: Glutamate-1-semialdehyde 2,1-aminomutase (427 aa).

Lysine 265 is subject to N6-(pyridoxal phosphate)lysine.

It belongs to the class-III pyridoxal-phosphate-dependent aminotransferase family. HemL subfamily. As to quaternary structure, homodimer. Pyridoxal 5'-phosphate serves as cofactor.

It localises to the cytoplasm. The catalysed reaction is (S)-4-amino-5-oxopentanoate = 5-aminolevulinate. The protein operates within porphyrin-containing compound metabolism; protoporphyrin-IX biosynthesis; 5-aminolevulinate from L-glutamyl-tRNA(Glu): step 2/2. The chain is Glutamate-1-semialdehyde 2,1-aminomutase from Pseudomonas entomophila (strain L48).